Here is a 226-residue protein sequence, read N- to C-terminus: Ribose-5-phosphate isomerase A (226 aa).

Substrate is bound by residues T26–T29, D82–D85, and K95–G98. The Proton acceptor role is filled by E104. K122 lines the substrate pocket.

It belongs to the ribose 5-phosphate isomerase family. In terms of assembly, homodimer.

It catalyses the reaction aldehydo-D-ribose 5-phosphate = D-ribulose 5-phosphate. It functions in the pathway carbohydrate degradation; pentose phosphate pathway; D-ribose 5-phosphate from D-ribulose 5-phosphate (non-oxidative stage): step 1/1. Functionally, catalyzes the reversible conversion of ribose-5-phosphate to ribulose 5-phosphate. This is Ribose-5-phosphate isomerase A from Streptococcus thermophilus (strain ATCC BAA-250 / LMG 18311).